Here is a 484-residue protein sequence, read N- to C-terminus: Cysteine--tRNA ligase (484 aa).

Residue cysteine 29 coordinates Zn(2+). The 'HIGH' region signature appears at proline 31–histidine 41. Zn(2+)-binding residues include cysteine 219, histidine 244, and glutamate 248. The short motif at lysine 275 to serine 279 is the 'KMSKS' region element. Lysine 278 provides a ligand contact to ATP.

This sequence belongs to the class-I aminoacyl-tRNA synthetase family. As to quaternary structure, monomer. Zn(2+) is required as a cofactor.

It is found in the cytoplasm. It catalyses the reaction tRNA(Cys) + L-cysteine + ATP = L-cysteinyl-tRNA(Cys) + AMP + diphosphate. The chain is Cysteine--tRNA ligase from Clavibacter michiganensis subsp. michiganensis (strain NCPPB 382).